The chain runs to 142 residues: Nucleoside diphosphate kinase (142 aa).

ATP contacts are provided by K11, F59, R87, T93, R104, and N114. H117 (pros-phosphohistidine intermediate) is an active-site residue.

Belongs to the NDK family. As to quaternary structure, homotetramer. Mg(2+) serves as cofactor.

The protein resides in the cytoplasm. The enzyme catalyses a 2'-deoxyribonucleoside 5'-diphosphate + ATP = a 2'-deoxyribonucleoside 5'-triphosphate + ADP. It carries out the reaction a ribonucleoside 5'-diphosphate + ATP = a ribonucleoside 5'-triphosphate + ADP. Functionally, major role in the synthesis of nucleoside triphosphates other than ATP. The ATP gamma phosphate is transferred to the NDP beta phosphate via a ping-pong mechanism, using a phosphorylated active-site intermediate. The polypeptide is Nucleoside diphosphate kinase (Yersinia pseudotuberculosis serotype O:1b (strain IP 31758)).